Reading from the N-terminus, the 1124-residue chain is SH3 and PX domain-containing protein 2A (1124 aa).

Positions 4–128 (YCVQDATVVD…RFFEARPEDV (125 aa)) constitute a PX domain. The 60-residue stretch at 166 to 225 (MILEQYVVVSNYKKQENSELSLQAGEVVDVIEKNESGWWFVSTSEEQGWVPATYLEAQNG) folds into the SH3 1 domain. Threonine 256 carries the phosphothreonine modification. An SH3 2 domain is found at 266-325 (SREEKYVTVQPYTSQSKDEIGFEKGVTVEVIRKNLEGWWYIRYLGKEGWAPASYLKKAKD). A phosphoserine mark is found at serine 405 and serine 420. 4 disordered regions span residues 414–443 (QRAQ…PKPP), 504–672 (RKKP…KLKA), 692–830 (SVTI…PKKE), and 886–952 (YLVA…GKTS). One can recognise an SH3 3 domain in the interval 447 to 506 (SVEVEYYTIAEFQSCISDGISFRGGQKAEVIDKNSGGWWYVQIGEKEGWAPASYIDKRKK). Residues serine 546 and serine 566 each carry the phosphoserine modification. Over residues 575–585 (SGDRGSGDKHP) the composition is skewed to basic and acidic residues. Serine 592 carries the post-translational modification Phosphoserine. Residues 607–619 (SSEDVALEEETIY) show a composition bias toward acidic residues. 2 stretches are compositionally biased toward low complexity: residues 633-669 (SARG…SLLK) and 692-709 (SVTI…SSLS). Serine 643 is subject to Phosphoserine. Residues 713–739 (GDLKPRSASDAGIRDTPKVGTKKDPDV) are compositionally biased toward basic and acidic residues. Threonine 728 is subject to Phosphothreonine. Residues serine 764, serine 766, and serine 812 each carry the phosphoserine modification. A Phosphothreonine modification is found at threonine 822. An SH3 4 domain is found at 833–892 (GQGATYVTCSAYQKVQDSEISFPEGAEVHVLEKAESGWWYVRFGELEGWAPSHYLVAEEN). A coiled-coil region spans residues 907-937 (SSQNEGKSDSLEKIEKRVQALNTVNQSKRAT). Residues 912–924 (GKSDSLEKIEKRV) show a composition bias toward basic and acidic residues. Residues 926–935 (ALNTVNQSKR) are compositionally biased toward polar residues. 4 positions are modified to phosphoserine: serine 993, serine 1007, serine 1008, and serine 1029. Positions 1020–1050 (KGRLAERAASQGSESPLLPTQRKGIPVSPVR) are disordered. The SH3 5 domain occupies 1063 to 1124 (NLKDVYISIA…VPSNYLEKKN (62 aa)).

Belongs to the SH3PXD2 family. In terms of assembly, interacts with ADAM12, ADAM15 and ADAM19. Interacts with NOXO1. Interacts (via SH3 domains) with NOXA1; the interaction is direct. Interacts (via N-terminus) with CYBA. Interacts with FASLG. Interacts (via PX domain) with RAB40B (GTP-bound); interaction promotes invadopodia-mediated extracellular matrix degradation. Post-translationally, tyrosine phosphorylated by SRC. Phosphorylation plays a regulatory role in the protein localization. The intramolecular interaction of the PX domain with the third SH3 domain maintains the protein in the cytoplasm and phosphorylation disrupts this interaction, resulting in the redistribution of the protein from cytoplasm to the perimembrane region. Phosphorylated on serine upon DNA damage, probably by ATM or ATR. Widely expressed. Not found in the spleen and testis.

Its subcellular location is the cytoplasm. The protein localises to the cell projection. It localises to the podosome. Functionally, adapter protein involved in invadopodia and podosome formation, extracellular matrix degradation and invasiveness of some cancer cells. Binds matrix metalloproteinases (ADAMs), NADPH oxidases (NOXs) and phosphoinositides. Acts as an organizer protein that allows NOX1- or NOX3-dependent reactive oxygen species (ROS) generation and ROS localization. In association with ADAM12, mediates the neurotoxic effect of amyloid-beta peptide. This Mus musculus (Mouse) protein is SH3 and PX domain-containing protein 2A.